The sequence spans 117 residues: Tyrosine-protein phosphatase 25 (117 aa).

Residues 1–117 (WLMIIEQKCN…DLIGQSPIVV (117 aa)) enclose the Tyrosine-protein phosphatase domain. Position 85 (aspartate 85) interacts with substrate.

Belongs to the protein-tyrosine phosphatase family.

The enzyme catalyses O-phospho-L-tyrosyl-[protein] + H2O = L-tyrosyl-[protein] + phosphate. In Styela plicata (Wrinkled sea squirt), this protein is Tyrosine-protein phosphatase 25 (STY-25).